The sequence spans 94 residues: Virion membrane protein OPG135 (94 aa).

The signal sequence occupies residues 1 to 22 (MSCYTAILKSVGGLALFQVANG). Over 23–45 (AIDLCRHFFMYFCEQKLRPNSFW) the chain is Intravirion. Residues 46–66 (FVVVRAIASMIMYLVLGIALL) form a helical membrane-spanning segment. At 67–83 (YISEQDNKKNTNNDKRN) the chain is on the virion surface side. Residues 74–84 (KKNTNNDKRNE) are compositionally biased toward basic and acidic residues. The interval 74 to 94 (KKNTNNDKRNESSINSNSSPK) is disordered. N-linked (GlcNAc...) asparagine; by host glycosylation occurs at N83. A compositionally biased stretch (polar residues) spans 85–94 (SSINSNSSPK).

It belongs to the oerthopoxvirus OPG135 family.

Its subcellular location is the virion membrane. The protein localises to the host cytoplasm. Its function is as follows. Envelope protein. Required for an early step in virion morphogenesis. This is Virion membrane protein OPG135 (OPG135) from Homo sapiens (Human).